Here is a 93-residue protein sequence, read N- to C-terminus: Large ribosomal subunit protein uL23 (93 aa).

Belongs to the universal ribosomal protein uL23 family. Part of the 50S ribosomal subunit. Contacts protein L29, and trigger factor when it is bound to the ribosome.

Functionally, one of the early assembly proteins it binds 23S rRNA. One of the proteins that surrounds the polypeptide exit tunnel on the outside of the ribosome. Forms the main docking site for trigger factor binding to the ribosome. This chain is Large ribosomal subunit protein uL23, found in Aliarcobacter butzleri (strain RM4018) (Arcobacter butzleri).